Reading from the N-terminus, the 238-residue chain is Probable septum site-determining protein MinC (238 aa).

It belongs to the MinC family. As to quaternary structure, interacts with MinD and FtsZ.

Cell division inhibitor that blocks the formation of polar Z ring septums. Rapidly oscillates between the poles of the cell to destabilize FtsZ filaments that have formed before they mature into polar Z rings. Prevents FtsZ polymerization. The sequence is that of Probable septum site-determining protein MinC from Xylella fastidiosa (strain M23).